Here is a 214-residue protein sequence, read N- to C-terminus: Glycine-rich protein 2 (214 aa).

In terms of domain architecture, CSD spans 8 to 75; the sequence is RAKGTVKWFS…RTKAVDVTGP (68 aa). Positions 54–91 are disordered; it reads TVEFEVESGGDGRTKAVDVTGPDGAAVQGGRGGGGGGG. Over residues 80 to 91 the composition is skewed to gly residues; the sequence is VQGGRGGGGGGG. 2 consecutive CCHC-type zinc fingers follow at residues 157-174 and 194-211; these read SGCFKCGESGHFARDCSQ and GGCYKCGEDGHFARECTS.

In Nicotiana sylvestris (Wood tobacco), this protein is Glycine-rich protein 2 (GRP-2).